Reading from the N-terminus, the 239-residue chain is Fatty acid metabolism regulator protein (239 aa).

In terms of domain architecture, HTH gntR-type spans 6–74; sequence QSPAGFAEEY…HGKPTKVNNF (69 aa). The segment at residues 34–53 is a DNA-binding region (H-T-H motif); sequence ERELSELIGVTRTTLREVLQ.

As to quaternary structure, homodimer.

The protein resides in the cytoplasm. Its function is as follows. Multifunctional regulator of fatty acid metabolism. Represses transcription of at least eight genes required for fatty acid transport and beta-oxidation including fadA, fadB, fadD, fadL and fadE. Activates transcription of at least three genes required for unsaturated fatty acid biosynthesis: fabA, fabB and iclR, the gene encoding the transcriptional regulator of the aceBAK operon encoding the glyoxylate shunt enzymes. Binding of FadR is specifically inhibited by long chain fatty acyl-CoA compounds. The protein is Fatty acid metabolism regulator protein of Salmonella typhi.